Here is a 253-residue protein sequence, read N- to C-terminus: MAHLLIVNADDFGLSRGQNYGIVECHRHGIVTSTTALVNAEGIEHAAQLCKELPHLGVGLHFTLTMGQPLSPIPSLTRNGVLGKWLWQMAEQEQLPLDEIRVELNAQYQRFVELFGCPPDHIDSHHHVHMFKQIFPIVAEFAQQKALPIRVDRLLAQKENLNTQGVISSDGFDSQFYGDEISQALFLKTLDDAKARGEQSLEVMTHPAFIDNPLRVSGYCFQRLTELEVLTQSSLKQAIAERGYQLGTYQDLI.

Residues H61 and H125 each coordinate Mg(2+).

The protein belongs to the YdjC deacetylase family. ChbG subfamily. Homodimer. Mg(2+) serves as cofactor.

The protein resides in the cytoplasm. The enzyme catalyses N,N'-diacetylchitobiose + H2O = N-acetyl-beta-D-glucosaminyl-(1-&gt;4)-D-glucosamine + acetate. It catalyses the reaction diacetylchitobiose-6'-phosphate + H2O = N'-monoacetylchitobiose-6'-phosphate + acetate. Its pathway is glycan degradation; chitin degradation. Functionally, involved in the degradation of chitin. ChbG is essential for growth on the acetylated chitooligosaccharides chitobiose and chitotriose but is dispensable for growth on cellobiose and chitosan dimer, the deacetylated form of chitobiose. Deacetylation of chitobiose-6-P and chitotriose-6-P is necessary for both the activation of the chb promoter by the regulatory protein ChbR and the hydrolysis of phosphorylated beta-glucosides by the phospho-beta-glucosidase ChbF. Catalyzes the removal of only one acetyl group from chitobiose-6-P to yield monoacetylchitobiose-6-P, the inducer of ChbR and the substrate of ChbF. The polypeptide is Chitooligosaccharide deacetylase (Proteus mirabilis (strain HI4320)).